The sequence spans 172 residues: Cytidylate kinase (172 aa).

4 to 12 lines the ATP pocket; that stretch reads GPPGSGKST.

This sequence belongs to the cytidylate kinase family. Type 2 subfamily.

The protein resides in the cytoplasm. The catalysed reaction is CMP + ATP = CDP + ADP. It catalyses the reaction dCMP + ATP = dCDP + ADP. The protein is Cytidylate kinase (cmk) of Aeropyrum pernix (strain ATCC 700893 / DSM 11879 / JCM 9820 / NBRC 100138 / K1).